The chain runs to 119 residues: Spermidine export protein MdtJ (119 aa).

4 consecutive transmembrane segments (helical) span residues 1–21 (MIYWILLALAIVSEITGTLAL), 31–51 (AGFILMLVMISLSYILLSFSV), 54–74 (IALGVAYALWEGVGIVLITLF), and 81–101 (ETLTVQKALGLLVLIAGILLI).

The protein belongs to the drug/metabolite transporter (DMT) superfamily. Small multidrug resistance (SMR) (TC 2.A.7.1) family. MdtJ subfamily. Forms a complex with MdtI.

It is found in the cell inner membrane. Its function is as follows. Catalyzes the excretion of spermidine. This is Spermidine export protein MdtJ (mdtJ) from Cronobacter sakazakii (strain ATCC BAA-894) (Enterobacter sakazakii).